Consider the following 330-residue polypeptide: Inactive hydroxysteroid dehydrogenase-like protein 1 (330 aa).

Residue A2 is modified to N-acetylalanine. A required for mitochondria translocation region spans residues 2 to 82; that stretch reads AAVDSFYLLY…SGATDGIGKA (81 aa). Residues 74–80, D125, and K222 contribute to the NADP(+) site; that span reads GATDGIG.

This sequence belongs to the short-chain dehydrogenases/reductases (SDR) family. 17-beta-HSD 3 subfamily. In terms of assembly, interacts with STYXL1.

The protein resides in the mitochondrion. The protein is Inactive hydroxysteroid dehydrogenase-like protein 1 (Hsdl1) of Mus musculus (Mouse).